A 266-amino-acid chain; its full sequence is Tryptophan synthase alpha chain (266 aa).

Residues E47 and D58 each act as proton acceptor in the active site.

It belongs to the TrpA family. Tetramer of two alpha and two beta chains.

It is found in the plastid. Its subcellular location is the chloroplast. The enzyme catalyses (1S,2R)-1-C-(indol-3-yl)glycerol 3-phosphate + L-serine = D-glyceraldehyde 3-phosphate + L-tryptophan + H2O. Its pathway is amino-acid biosynthesis; L-tryptophan biosynthesis; L-tryptophan from chorismate: step 5/5. Its function is as follows. The alpha subunit is responsible for the aldol cleavage of indoleglycerol phosphate to indole and glyceraldehyde 3-phosphate. The chain is Tryptophan synthase alpha chain from Cyanidium caldarium (Red alga).